The primary structure comprises 369 residues: Cystathionine gamma-synthase (369 aa).

K200 bears the N6-(pyridoxal phosphate)lysine mark.

It belongs to the trans-sulfuration enzymes family. As to quaternary structure, homotetramer. It depends on pyridoxal 5'-phosphate as a cofactor.

Its subcellular location is the cytoplasm. The enzyme catalyses O-succinyl-L-homoserine + L-cysteine = L,L-cystathionine + succinate + H(+). Its function is as follows. Catalyzes the formation of L-cystathionine from O-succinyl-L-homoserine (OSHS) and L-cysteine, via a gamma-replacement reaction. In the absence of thiol, catalyzes gamma-elimination to form 2-oxobutanoate, succinate and ammonia. The sequence is that of Cystathionine gamma-synthase (metB) from Haemophilus influenzae (strain ATCC 51907 / DSM 11121 / KW20 / Rd).